We begin with the raw amino-acid sequence, 478 residues long: UDP-N-acetylmuramate--L-alanine ligase (478 aa).

G122–T128 provides a ligand contact to ATP.

The protein belongs to the MurCDEF family.

The protein resides in the cytoplasm. The catalysed reaction is UDP-N-acetyl-alpha-D-muramate + L-alanine + ATP = UDP-N-acetyl-alpha-D-muramoyl-L-alanine + ADP + phosphate + H(+). It participates in cell wall biogenesis; peptidoglycan biosynthesis. Functionally, cell wall formation. This is UDP-N-acetylmuramate--L-alanine ligase from Stenotrophomonas maltophilia (strain R551-3).